Consider the following 566-residue polypeptide: NAD-dependent malic enzyme (566 aa).

The active-site Proton donor is the Y105. Residue R158 participates in NAD(+) binding. K176 (proton acceptor) is an active-site residue. The a divalent metal cation site is built by E247, D248, and D271. NAD(+)-binding residues include D271 and N419.

Belongs to the malic enzymes family. Homotetramer. It depends on Mg(2+) as a cofactor. Requires Mn(2+) as cofactor.

The enzyme catalyses (S)-malate + NAD(+) = pyruvate + CO2 + NADH. It carries out the reaction oxaloacetate + H(+) = pyruvate + CO2. The sequence is that of NAD-dependent malic enzyme from Acinetobacter baylyi (strain ATCC 33305 / BD413 / ADP1).